The chain runs to 142 residues: ATP synthase epsilon chain (142 aa).

It belongs to the ATPase epsilon chain family. F-type ATPases have 2 components, CF(1) - the catalytic core - and CF(0) - the membrane proton channel. CF(1) has five subunits: alpha(3), beta(3), gamma(1), delta(1), epsilon(1). CF(0) has three main subunits: a, b and c.

The protein localises to the cell inner membrane. Its function is as follows. Produces ATP from ADP in the presence of a proton gradient across the membrane. The chain is ATP synthase epsilon chain from Koribacter versatilis (strain Ellin345).